Consider the following 137-residue polypeptide: ATP synthase epsilon chain (137 aa).

The protein belongs to the ATPase epsilon chain family. In terms of assembly, F-type ATPases have 2 components, CF(1) - the catalytic core - and CF(0) - the membrane proton channel. CF(1) has five subunits: alpha(3), beta(3), gamma(1), delta(1), epsilon(1). CF(0) has three main subunits: a, b and c.

It localises to the cellular thylakoid membrane. Produces ATP from ADP in the presence of a proton gradient across the membrane. The chain is ATP synthase epsilon chain from Trichodesmium erythraeum (strain IMS101).